Here is a 147-residue protein sequence, read N- to C-terminus: Transcriptional regulator MraZ (147 aa).

2 consecutive SpoVT-AbrB domains span residues 6-48 (NFER…NSEE) and 77-120 (TVEV…SKAK).

Belongs to the MraZ family. As to quaternary structure, forms oligomers.

Its subcellular location is the cytoplasm. The protein localises to the nucleoid. The sequence is that of Transcriptional regulator MraZ from Mycoplasmopsis pulmonis (strain UAB CTIP) (Mycoplasma pulmonis).